The chain runs to 314 residues: Formylglycine-generating enzyme (314 aa).

A compositionally biased stretch (low complexity) spans methionine 1 to proline 20. A disordered region spans residues methionine 1–glycine 31. Ca(2+) contacts are provided by asparagine 194, isoleucine 195, aspartate 208, and histidine 210. Cysteine 272 and cysteine 277 together coordinate Cu(2+).

This sequence belongs to the sulfatase-modifying factor family. Cu(2+) serves as cofactor.

It catalyses the reaction L-cysteinyl-[sulfatase] + 2 a thiol + O2 = an organic disulfide + 3-oxo-L-alanyl-[sulfatase] + hydrogen sulfide + H2O + H(+). The protein operates within protein modification; sulfatase oxidation. Its function is as follows. Oxidase that catalyzes the conversion of cysteine to 3-oxoalanine on target proteins. 3-oxoalanine modification, which is also named formylglycine (fGly), occurs in the maturation of arylsulfatases and some alkaline phosphatases that use the hydrated form of 3-oxoalanine as a catalytic nucleophile. The polypeptide is Formylglycine-generating enzyme (Streptomyces coelicolor (strain ATCC BAA-471 / A3(2) / M145)).